The primary structure comprises 428 residues: Enolase (428 aa).

Position 165 (Q165) interacts with (2R)-2-phosphoglycerate. Residue E207 is the Proton donor of the active site. Mg(2+) contacts are provided by D244, E285, and D312. (2R)-2-phosphoglycerate is bound by residues K337, R366, S367, and K388. K337 (proton acceptor) is an active-site residue.

The protein belongs to the enolase family. In terms of assembly, component of the RNA degradosome, a multiprotein complex involved in RNA processing and mRNA degradation. It depends on Mg(2+) as a cofactor.

The protein localises to the cytoplasm. It is found in the secreted. Its subcellular location is the cell surface. The enzyme catalyses (2R)-2-phosphoglycerate = phosphoenolpyruvate + H2O. Its pathway is carbohydrate degradation; glycolysis; pyruvate from D-glyceraldehyde 3-phosphate: step 4/5. In terms of biological role, catalyzes the reversible conversion of 2-phosphoglycerate (2-PG) into phosphoenolpyruvate (PEP). It is essential for the degradation of carbohydrates via glycolysis. This Coxiella burnetii (strain CbuK_Q154) (Coxiella burnetii (strain Q154)) protein is Enolase.